The primary structure comprises 145 residues: Actin-depolymerizing factor 11 (145 aa).

The ADF-H domain occupies 11 to 145; that stretch reads SSGIGVAAEC…DIELLRERAH (135 aa).

This sequence belongs to the actin-binding proteins ADF family.

In terms of biological role, actin-depolymerizing protein. Severs actin filaments (F-actin) and binds to actin monomers. In Oryza sativa subsp. japonica (Rice), this protein is Actin-depolymerizing factor 11 (ADF11).